The primary structure comprises 326 residues: MIRVKREFTVKENALRLDLYLSGNFEVFTRSQIKRRNVEAFKKSNGKFLKIKLSKPVFKDDEILIEFDEESSQIDCLRPSNIPIAIIYEDSNVIVLNKPQGILSHPGISHWDDTVVNFLLYHIKSLKINFNEEKIRPGIVHRLDKDTSGVLICAKNISTLRFLAQQFKDKRTNKVYIAIVKGNFNSFFGSIESFIDRDKHNRKKFSVSKDRGKKALTEYRLLLNFGEYSLLALKPKTGRTHQLRVHMKYLNFPILGDEVYGRVDGSLKKITLMLHSYKLEIDVGKNSFKKFISEFPKRFVIFLSNFYKSDELNLIIDNLVLFLRDF.

D144 is an active-site residue.

It belongs to the pseudouridine synthase RluA family.

It is found in the cytoplasm. The enzyme catalyses uridine(1911/1915/1917) in 23S rRNA = pseudouridine(1911/1915/1917) in 23S rRNA. In terms of biological role, responsible for synthesis of pseudouridine from uracil at positions 1911, 1915 and 1917 in 23S ribosomal RNA. The protein is Ribosomal large subunit pseudouridine synthase D of Borreliella burgdorferi (strain ATCC 35210 / DSM 4680 / CIP 102532 / B31) (Borrelia burgdorferi).